A 35-amino-acid polypeptide reads, in one-letter code: MFGQYEVFVQLALLALIVLAGPAVILLLYLRGADM.

A helical transmembrane segment spans residues 7-27 (VFVQLALLALIVLAGPAVILL).

The protein belongs to the Psb30/Ycf12 family. In terms of assembly, PSII is composed of 1 copy each of membrane proteins PsbA, PsbB, PsbC, PsbD, PsbE, PsbF, PsbH, PsbI, PsbJ, PsbK, PsbL, PsbM, PsbT, PsbX, PsbY, PsbZ, Psb30/Ycf12, peripheral proteins PsbO, CyanoQ (PsbQ), PsbU, PsbV and a large number of cofactors. It forms dimeric complexes.

Its subcellular location is the cellular thylakoid membrane. In terms of biological role, a core subunit of photosystem II (PSII), probably helps stabilize the reaction center. The chain is Photosystem II reaction center protein Psb30 from Synechococcus sp. (strain JA-2-3B'a(2-13)) (Cyanobacteria bacterium Yellowstone B-Prime).